We begin with the raw amino-acid sequence, 332 residues long: Multiple virulence factor regulator MvfR (332 aa).

Residues 4–61 enclose the HTH lysR-type domain; it reads HNLNHVNMFLQVIASGSISSAARILRKSHTAVSSAVSNLEIDLCVELVRRDGYKVEPT. A DNA-binding region (H-T-H motif) is located at residues 21-40; it reads ISSAARILRKSHTAVSSAVS.

Belongs to the LysR transcriptional regulatory family. As to quaternary structure, forms homooligomers.

It is found in the cell inner membrane. It localises to the secreted. With respect to regulation, both 3,4-dihydroxy-2-heptylquinoline (PQS) and its precursor 4-hydroxy-2-heptylquinoline (HHQ) function as ligands and promote MvfR DNA-binding activity leading to transcriptional activation. Functionally, transcription regulator that plays a critical role in virulence by positively regulating the expression of multiple quorum sensing (QS)-regulated virulence factors, genes involved in protein secretion, translation, response to oxidative stress and the phnAB operon. At the stationary phase, negatively autoregulates its function through cleavage and translocation to the extracellular space. This Pseudomonas aeruginosa (strain ATCC 15692 / DSM 22644 / CIP 104116 / JCM 14847 / LMG 12228 / 1C / PRS 101 / PAO1) protein is Multiple virulence factor regulator MvfR.